Reading from the N-terminus, the 263-residue chain is Aquaporin-8 (263 aa).

Topologically, residues 1-38 (MSGEQTPMCSMDLREIKGKETNMADSYHGMSWYEQYIQ) are cytoplasmic. The chain crosses the membrane as a helical span at residues 39–59 (PCVVELLGSALFIFIGCLSVI). Cys-55 is modified (cysteine persulfide). At Cys-55 the chain carries Cysteine sulfenic acid (-SOH). Over 60-86 (ENSPNTGLLQPALAHGLALGLIIATLG) the chain is Extracellular. The helical transmembrane segment at 87-107 (NISGGHFNPAVSLAVTLVGGL) threads the bilayer. The NPA 1 signature appears at 94 to 96 (NPA). Over 108–109 (KT) the chain is Cytoplasmic. The helical transmembrane segment at 110 to 130 (MLLIPYWVSQLFGGMIGAALA) threads the bilayer. Residues 131-158 (KVVSPEERFWNASGAAFAIVQEQEQVAE) lie on the Extracellular side of the membrane. N-linked (GlcNAc...) asparagine glycosylation occurs at Asn-141. Residues 159 to 179 (ALGVEIVMTMLLVLAVCMGAV) traverse the membrane as a helical segment. Topologically, residues 180-185 (NEKTMG) are cytoplasmic. The chain crosses the membrane as a helical span at residues 186-206 (PLAPFSIGFSVIVDILAGGGI). Residues 207-230 (SGACMNPARAFGPAVMAGYWDFHW) are Extracellular-facing. An NPA 2 motif is present at residues 212 to 214 (NPA). A helical transmembrane segment spans residues 231–251 (IYWLGPLLAGLFVGLLIRLFI). The Cytoplasmic segment spans residues 252–263 (GDEKTRLILKSR).

This sequence belongs to the MIP/aquaporin (TC 1.A.8) family. N-glycosylated. Post-translationally, sulfenylation at Cys-55(C55-SOH) when hydrogen peroxide flows through the AQP8 channel, making it susceptible to hydrogen sulfide produced by CBS. In terms of processing, persulfidation at Cys-55 is required to gate AQP8 channel; under stress condition, hydrogen peroxide accumulates in the cell leading to CBS activation that produces hydrogen sulfide inducing persulfidation of oxidized Cys-55 (C55-SOH). Highly expressed in sperm, pancreas and liver. Expressed in hepatocytes, acinal cells of pancreas and salivary gland, and absorptive colonic epithelial cells. Expressed in the myoepithelium of submandibular and parotid glands. Expressed in pancreatic beta-cells. Expressed in testis but not in epididymis. Expressed in small intestine.

The protein localises to the cell membrane. It is found in the mitochondrion inner membrane. It localises to the apical cell membrane. The protein resides in the basolateral cell membrane. Its subcellular location is the smooth endoplasmic reticulum membrane. It carries out the reaction H2O(in) = H2O(out). It catalyses the reaction NH4(+)(in) = NH4(+)(out). The enzyme catalyses H2O2(out) = H2O2(in). The catalysed reaction is formamide(out) = formamide(in). It carries out the reaction methylamine(out) = methylamine(in). Reversibly gated by a two-step sulfenylation-persulfidation process in cells undergoing diverse stresses. Its function is as follows. Channel that allows the facilitated permeation of water and uncharged molecules, such as hydrogen peroxide and the neutral form of ammonia (NH3), through cellular membranes such as plasma membrane, inner mitochondrial membrane and endoplasmic reticulum membrane of several tissues. The transport of ammonia neutral form induces a parallel transport of proton, at alkaline pH when the concentration of ammonia is high. However, it is unclear whether the transport of proton takes place via the aquaporin or via an endogenous pathway. Also, may transport ammonia analogs such as formamide and methylamine, a transport favourited at basic pH due to the increase of unprotonated (neutral) form, which is expected to favor diffusion. Does not transport urea or glycerol. The water transport mechanism is mercury- and copper-sensitive and passive in response to osmotic driving forces. At the canicular plasma membrane, mediates the osmotic transport of water toward the bile canaliculus and facilitates the cAMP-induced bile canalicular water secretion, a process involved in bile formation. In addition, mediates the hydrogen peroxide release from hepatocyte mitochondria that modulates the SREBF2-mediated cholesterol synthesis and facilitates the mitochondrial ammonia uptake which is metabolized into urea, mainly under glucagon stimulation. In B cells, transports the CYBB-generated hydrogen peroxide from the external leaflet of the plasma membrane to the cytosol to promote B cell activation and differentiation for signal amplification. In the small intestine and colon system, mediates water transport through mitochondria and apical membrane of epithelial cells. May play an important role in the adaptive response of proximal tubule cells to acidosis possibly facilitating mitochondrial ammonia transport. The polypeptide is Aquaporin-8 (Rattus norvegicus (Rat)).